The sequence spans 189 residues: Peptidyl-tRNA hydrolase (189 aa).

TRNA is bound at residue Tyr-15. The active-site Proton acceptor is the His-20. TRNA is bound by residues Phe-66, Asn-68, and Asn-114.

Belongs to the PTH family. As to quaternary structure, monomer.

The protein resides in the cytoplasm. It carries out the reaction an N-acyl-L-alpha-aminoacyl-tRNA + H2O = an N-acyl-L-amino acid + a tRNA + H(+). Hydrolyzes ribosome-free peptidyl-tRNAs (with 1 or more amino acids incorporated), which drop off the ribosome during protein synthesis, or as a result of ribosome stalling. Its function is as follows. Catalyzes the release of premature peptidyl moieties from peptidyl-tRNA molecules trapped in stalled 50S ribosomal subunits, and thus maintains levels of free tRNAs and 50S ribosomes. This Streptococcus pneumoniae (strain CGSP14) protein is Peptidyl-tRNA hydrolase.